The sequence spans 470 residues: GDP-Man:Man(3)GlcNAc(2)-PP-Dol alpha-1,2-mannosyltransferase (470 aa).

Residues M1 to T15 lie on the Lumenal side of the membrane. The helical transmembrane segment at V16 to F36 threads the bilayer. The Cytoplasmic segment spans residues R37 to Q131. Residues A132–I152 constitute an intramembrane region (helical). Topologically, residues D153–H378 are cytoplasmic. Residues F379–G399 constitute an intramembrane region (helical). The Cytoplasmic portion of the chain corresponds to G400 to L470.

It belongs to the glycosyltransferase group 1 family. Glycosyltransferase 4 subfamily.

Its subcellular location is the endoplasmic reticulum membrane. It catalyses the reaction an alpha-D-Man-(1-&gt;3)-[alpha-D-Man-(1-&gt;6)]-beta-D-Man-(1-&gt;4)-beta-D-GlcNAc-(1-&gt;4)-alpha-D-GlcNAc-diphospho-di-trans,poly-cis-dolichol + 2 GDP-alpha-D-mannose = an alpha-D-Man-(1-&gt;2)-alpha-D-Man-(1-&gt;2)-alpha-D-Man-(1-&gt;3)-[alpha-D-Man-(1-&gt;6)]-beta-D-Man-(1-&gt;4)-beta-D-GlcNAc-(1-&gt;4)-alpha-D-GlcNAc-diphospho-di-trans,poly-cis-dolichol + 2 GDP + 2 H(+). It functions in the pathway protein modification; protein glycosylation. GDP-Man:Man(3)GlcNAc(2)-PP-Dol alpha-1,2-mannosyltransferase that operates in the biosynthetic pathway of dolichol-linked oligosaccharides, the glycan precursors employed in protein asparagine (N)-glycosylation. The assembly of dolichol-linked oligosaccharides begins on the cytosolic side of the endoplasmic reticulum membrane and finishes in its lumen. The sequential addition of sugars to dolichol pyrophosphate produces dolichol-linked oligosaccharides containing fourteen sugars, including two GlcNAcs, nine mannoses and three glucoses. Once assembled, the oligosaccharide is transferred from the lipid to nascent proteins by oligosaccharyltransferases. Catalyzes, on the cytoplasmic face of the endoplasmic reticulum, the addition of the fourth and fifth mannose residues to the dolichol-linked oligosaccharide chain, to produce Man(5)GlcNAc(2)-PP-dolichol core oligosaccharide. Man(5)GlcNAc(2)-PP-dolichol is a substrate for ALG3, the following enzyme in the biosynthetic pathway. This is GDP-Man:Man(3)GlcNAc(2)-PP-Dol alpha-1,2-mannosyltransferase from Caenorhabditis elegans.